We begin with the raw amino-acid sequence, 712 residues long: MARQTPITRYRNIGISAHIDAGKTTTTERILFYTGVSHKIGEVHDGAATMDWMEQEQERGITITSAATTCFWSGMGNQFPQHRINVIDTPGHVDFTIEVERSMRVLDGACMVYCAVGGVQPQSETVWRQANKYKVPRLAFVNKMDRTGANFFRVVEQMKTRLGANPVPIVVPIGAEDTFTGVVDLIEMKAIIWDEASQGMKFEYGEIPADLVDTAQEWRTNMVEAAAEASEELMDKYLEEGDLSKEDIIAGLRARTLASEIQVMLCGSAFKNKGVQRMLDAVIEFLPSPTEVKAIEGILDDKDETKASREASDEAPFSALAFKIMNDKFVGNLTFVRVYSGVLKQGDAVYNPVKSKRERIGRIVQMHANERQDIDEIRAGDIAACVGLKDVTTGDTLCDEKNIITLERMEFPDPVIQLAVEPKTKADQEKMSIALGRLAKEDPSFRVHTDEESGQTIIAGMGELHLDIIVDRMKREFGVEANIGKPMVAYRETIKKTVEQEGKFVRQTGGKGKFGHVYVRLEPLDVEAAGKEYEFAEEVVGGVVPKEFFGAVDKGIQERMKNGVLAGYPVVGVKAVLFDGSYHDVDSDELSFKMAGSYAFRDGFMKADPVLLEPIMKVEVETPEDYMGDIMGDLNRRRGMVQGMDDLPGGTKAIKAEVPLAEMFGYATQMRSMSQGRATYSMEFAKYAETPRNVAEGIIAKFQAGGKKGDDE.

One can recognise a tr-type G domain in the interval 8–290 (TRYRNIGISA…AVIEFLPSPT (283 aa)). GTP is bound by residues 17 to 24 (AHIDAGKT), 88 to 92 (DTPGH), and 142 to 145 (NKMD).

This sequence belongs to the TRAFAC class translation factor GTPase superfamily. Classic translation factor GTPase family. EF-G/EF-2 subfamily.

The protein resides in the cytoplasm. Functionally, catalyzes the GTP-dependent ribosomal translocation step during translation elongation. During this step, the ribosome changes from the pre-translocational (PRE) to the post-translocational (POST) state as the newly formed A-site-bound peptidyl-tRNA and P-site-bound deacylated tRNA move to the P and E sites, respectively. Catalyzes the coordinated movement of the two tRNA molecules, the mRNA and conformational changes in the ribosome. The chain is Elongation factor G from Acinetobacter baumannii (strain AB0057).